A 573-amino-acid chain; its full sequence is AP-4 complex accessory subunit Tepsin (573 aa).

In terms of domain architecture, ENTH spans 8-141 (RDRLSFLHRL…FSDAVPQPPS (134 aa)). Disordered regions lie at residues 136-155 (VPQPPSQPPQIPPPAGMGAQ) and 194-311 (NAVR…NDCQ). A compositionally biased stretch (pro residues) spans 137 to 150 (PQPPSQPPQIPPPA). Over residues 217–229 (PAVTPSASHTHPN) the composition is skewed to polar residues. The span at 260–293 (SSPSSQNSSCTSNLSRASDSGSRSGSDSHSGTSR) shows a compositional bias: low complexity. A compositionally biased stretch (basic and acidic residues) spans 294–303 (EPGDLAERAE). At S400 the chain carries Phosphoserine. Residues 497 to 526 (CSSEQGTESEQRLENTDTPEDSSSPLPWSP) are disordered. The tract at residues 526-536 (PNSLFAGMELV) is interaction with AP4B1. An interaction with AP4E1 region spans residues 563–573 (SEPSAFAFLNM).

Interacts with AP4B1 and AP4E1; the interaction is direct and mediates the association of TEPSIN with the adapter-like complex 4 (AP-4), a heterotetramer composed of AP4B1, AP4E1, AP4M1 and AP4S1.

It is found in the golgi apparatus. Its subcellular location is the trans-Golgi network membrane. The protein resides in the cytoplasmic vesicle. The protein localises to the cytoplasm. It localises to the cytosol. In terms of biological role, associates with the adapter-like complex 4 (AP-4) and may therefore play a role in vesicular trafficking of proteins at the trans-Golgi network. The chain is AP-4 complex accessory subunit Tepsin from Mus musculus (Mouse).